The following is a 485-amino-acid chain: MTNTVSTMILFGSTGDLSQRMLLPSLYGLDADGLLADDLRIVCTSRSEYDTDGFRDFAEKALDRFVASDRLNDDAKAKFLNKLFYATVDITDPTQFGKLADLCGPVEKGIAIYLSTAPSLFEGAIAGLKQAGLAGPTSRLALEKPLGQDLASSDHINDAVLKVFSEKQVYRIDHYLGKETVQNLLTLRFGNALFEPLWNSKGIDHVQISVAETVGLEGRIGYFDGSGSLRDMVQSHILQLVALVAMEPPAHMEANAVRDEKVKVFRALRPINNDTVFTHTVTGQYGAGVSGGKEVAGYIDELGQPSDTETFVAIKAHVDNWRWQGVPFYIRTGKRLPARRSEIVVQFKPVPHSIFSSSGGILQPNKLRIVLQPDETIQISMMVKEPGLDRNGAHMREVWLDLSLTDVFKDRKRRIAYERLMLDLIEGDATLFVRRDEVEAQWVWIDGIREGWKANSMKPKTYVSGTWGPSTAIALAERDGVTWYD.

Residues arginine 46, 89-90, and lysine 144 each bind NADP(+); that span reads DI. Residues histidine 174, lysine 178, glutamate 212, and aspartate 231 each contribute to the substrate site. Histidine 236 (proton acceptor) is an active-site residue. Substrate is bound at residue lysine 334.

This sequence belongs to the glucose-6-phosphate dehydrogenase family.

It carries out the reaction D-glucose 6-phosphate + NADP(+) = 6-phospho-D-glucono-1,5-lactone + NADPH + H(+). The protein operates within carbohydrate degradation; pentose phosphate pathway; D-ribulose 5-phosphate from D-glucose 6-phosphate (oxidative stage): step 1/3. Catalyzes the oxidation of glucose 6-phosphate to 6-phosphogluconolactone. This Zymomonas mobilis subsp. mobilis (strain ATCC 31821 / ZM4 / CP4) protein is Glucose-6-phosphate 1-dehydrogenase.